The sequence spans 177 residues: MSLQDAHNSSSPSQKLPLWVQCLEHGQGLGLPHYATEGSAGLDLRAALPENESITLSPGQRALIPTGLIFHLSPGFEAQIRPRSGLALKNGITCLNTPGTIDSDYRGEVKVLLINLGQEDFIIERGMRIAQTVIAPVTQVEVRLLDPNSDLTSSQTDLSNQPNTGRGTGGFGSTGQK.

Residues 83–85 (RSG), asparagine 96, 100–102 (TID), and lysine 110 each bind substrate. Polar residues predominate over residues 150 to 163 (DLTSSQTDLSNQPN). Residues 150–177 (DLTSSQTDLSNQPNTGRGTGGFGSTGQK) are disordered. Positions 166-177 (RGTGGFGSTGQK) are enriched in gly residues.

Belongs to the dUTPase family. Mg(2+) serves as cofactor.

It catalyses the reaction dUTP + H2O = dUMP + diphosphate + H(+). Its pathway is pyrimidine metabolism; dUMP biosynthesis; dUMP from dCTP (dUTP route): step 2/2. In terms of biological role, this enzyme is involved in nucleotide metabolism: it produces dUMP, the immediate precursor of thymidine nucleotides and it decreases the intracellular concentration of dUTP so that uracil cannot be incorporated into DNA. The sequence is that of Deoxyuridine 5'-triphosphate nucleotidohydrolase from Bartonella bacilliformis (strain ATCC 35685 / KC583 / Herrer 020/F12,63).